Here is a 159-residue protein sequence, read N- to C-terminus: Cyanate hydratase (159 aa).

Active-site residues include R103, E106, and S129.

Belongs to the cyanase family.

The catalysed reaction is cyanate + hydrogencarbonate + 3 H(+) = NH4(+) + 2 CO2. Catalyzes the reaction of cyanate with bicarbonate to produce ammonia and carbon dioxide. The sequence is that of Cyanate hydratase from Blastomyces gilchristii (strain SLH14081) (Blastomyces dermatitidis).